The following is a 403-amino-acid chain: Alkaline protease 1 (403 aa).

Positions 1-21 are cleaved as a signal peptide; that stretch reads MQSIKRTLLLLGAVLPAVLAG. Positions 22–121 are excised as a propeptide; the sequence is PIFPHRRAPT…VEEDQVWHLF (100 aa). An Inhibitor I9 domain is found at 36–120; the sequence is KYIVTFKSDV…AVEEDQVWHL (85 aa). The Peptidase S8 domain occupies 130–403; the sequence is PWGLGSISHK…PNLLAYNGNA (274 aa). Residues aspartate 162 and histidine 193 each act as charge relay system in the active site. N-linked (GlcNAc...) asparagine glycosylation is found at asparagine 253 and asparagine 309. The active-site Charge relay system is serine 349.

The protein belongs to the peptidase S8 family.

The protein resides in the secreted. The enzyme catalyses Hydrolysis of proteins with broad specificity, and of Bz-Arg-OEt &gt; Ac-Tyr-OEt. Does not hydrolyze peptide amides.. Its function is as follows. Secreted alkaline protease that allows assimilation of proteinaceous substrates. The chain is Alkaline protease 1 (alp1) from Aspergillus flavus.